Reading from the N-terminus, the 331-residue chain is Ketol-acid reductoisomerase (NADP(+)) (331 aa).

In terms of domain architecture, KARI N-terminal Rossmann spans 2 to 181; it reads IKKYYESDAD…GATRAVVFET (180 aa). NADP(+) contacts are provided by residues 25–28, Arg48, Ser52, and 82–85; these read YGSQ and DESQ. His107 is an active-site residue. Gly133 contributes to the NADP(+) binding site. The 146-residue stretch at 182 to 327 folds into the KARI C-terminal knotted domain; the sequence is TFREETETDL…AEIRGLMPQF (146 aa). Positions 190, 194, 226, and 230 each coordinate Mg(2+). Position 251 (Ser251) interacts with substrate.

Belongs to the ketol-acid reductoisomerase family. The cofactor is Mg(2+).

It catalyses the reaction (2R)-2,3-dihydroxy-3-methylbutanoate + NADP(+) = (2S)-2-acetolactate + NADPH + H(+). The enzyme catalyses (2R,3R)-2,3-dihydroxy-3-methylpentanoate + NADP(+) = (S)-2-ethyl-2-hydroxy-3-oxobutanoate + NADPH + H(+). It functions in the pathway amino-acid biosynthesis; L-isoleucine biosynthesis; L-isoleucine from 2-oxobutanoate: step 2/4. The protein operates within amino-acid biosynthesis; L-valine biosynthesis; L-valine from pyruvate: step 2/4. Functionally, involved in the biosynthesis of branched-chain amino acids (BCAA). Catalyzes an alkyl-migration followed by a ketol-acid reduction of (S)-2-acetolactate (S2AL) to yield (R)-2,3-dihydroxy-isovalerate. In the isomerase reaction, S2AL is rearranged via a Mg-dependent methyl migration to produce 3-hydroxy-3-methyl-2-ketobutyrate (HMKB). In the reductase reaction, this 2-ketoacid undergoes a metal-dependent reduction by NADPH to yield (R)-2,3-dihydroxy-isovalerate. The protein is Ketol-acid reductoisomerase (NADP(+)) of Methanosphaerula palustris (strain ATCC BAA-1556 / DSM 19958 / E1-9c).